An 898-amino-acid polypeptide reads, in one-letter code: Metalloprotease StcE (898 aa).

Residues 1-35 (MNTKMNERWRTPMKLKYLSCTILAPLAIGVFSATA) form the signal peptide. The Peptidase M66 domain occupies 296-551 (ELLLHTIDIG…QRFFENKAVF (256 aa)). Position 446 (H446) interacts with Zn(2+). Residue E447 is part of the active site. Zn(2+) is bound by residues H450 and H456.

Zn(2+) serves as cofactor.

It localises to the secreted. With respect to regulation, inhibited by divalent cation chelators such as BPS and EDTA. Its function is as follows. Virulence factor that contributes to intimate adherence of enterohemorrhagic E.coli (EHEC) O157:H7 to host cells. Is able to cleave the secreted human mucin 7 (MUC7) and the glycoprotein 340 (DMBT1/GP340). Also cleaves human C1 inhibitor (SERPING1), a regulator of multiple inflammatory pathways, and binds and localizes it to bacterial and host cell surfaces, protecting them from complement-mediated lysis. Therefore, the current model proposes two roles for StcE during infection: it acts first as a mucinase, allowing passage of EHEC through the oral cavity by cleaving the salivary glycoproteins that are responsible for bacterial aggregation. Similarly, in the colon, StcE cleaves the glycoproteins that protect the intestinal epithelial surface, allowing EHEC to come into close contact with host cell membranes. Secondly, it acts as an anti-inflammatory agent by localizing SERPING1 to cell membranes. This Escherichia coli O157:H7 protein is Metalloprotease StcE (stcE).